We begin with the raw amino-acid sequence, 252 residues long: Electron transfer flavoprotein subunit beta (252 aa).

The protein belongs to the ETF beta-subunit/FixA family. Heterodimer of an alpha and a beta subunit. Requires AMP as cofactor.

The protein resides in the cytoplasm. Its pathway is lipid metabolism; butanoate metabolism. Functionally, part of an electron transfer flavoprotein involved in syntrophic growth of S.wolfei with butyrate. Probably receives electrons from butyryl-CoA dehydrogenases, and transfers them to the membrane-bound quinone oxidoreductase Swol_0698. This Syntrophomonas wolfei subsp. wolfei (strain DSM 2245B / Goettingen) protein is Electron transfer flavoprotein subunit beta.